We begin with the raw amino-acid sequence, 626 residues long: Transketolase-like protein 2 (626 aa).

Residues Ser41, His78, and 124–126 each bind thiamine diphosphate; that span reads GSL. Asp156 lines the Mg(2+) pocket. 2 residues coordinate thiamine diphosphate: Gly157 and Asn186. Mg(2+) is bound by residues Asn186 and Leu188. Thiamine diphosphate is bound by residues Lys248 and His262. Substrate-binding residues include His262 and Ser349. Thiamine diphosphate is bound by residues Glu370 and Phe396. Glu370 (proton donor) is an active-site residue. Substrate-binding residues include His420 and Asp428. Gln432 provides a ligand contact to thiamine diphosphate.

The protein belongs to the transketolase family. Homodimer. The cofactor is Mg(2+). Ca(2+) is required as a cofactor. Mn(2+) serves as cofactor. Requires Co(2+) as cofactor. It depends on thiamine diphosphate as a cofactor. Overexpressed in hepatoma cancer cells.

It carries out the reaction D-sedoheptulose 7-phosphate + D-glyceraldehyde 3-phosphate = aldehydo-D-ribose 5-phosphate + D-xylulose 5-phosphate. Its function is as follows. Plays an essential role in total transketolase activity and cell proliferation in cancer cells; after transfection with anti-TKTL1 siRNA, total transketolase activity dramatically decreases and proliferation was significantly inhibited in cancer cells. Plays a pivotal role in carcinogenesis. This Homo sapiens (Human) protein is Transketolase-like protein 2 (TKTL2).